A 131-amino-acid polypeptide reads, in one-letter code: Monothiol glutaredoxin-S6 (131 aa).

A Glutaredoxin domain is found at 31–131; that stretch reads SAFVQNAIYS…KLLGNSQSQR (101 aa). A [2Fe-2S] cluster-binding site is contributed by Cys-51.

Belongs to the glutaredoxin family. CPYC subfamily.

Its subcellular location is the cytoplasm. In terms of biological role, may only reduce GSH-thiol disulfides, but not protein disulfides. The sequence is that of Monothiol glutaredoxin-S6 (GRXS6) from Oryza sativa subsp. japonica (Rice).